Consider the following 81-residue polypeptide: uncharacterized protein (81 aa).

This is an uncharacterized protein from Homo sapiens (Human).